The sequence spans 271 residues: uncharacterized protein (271 aa).

Belongs to the HAD-like hydrolase superfamily.

This is an uncharacterized protein from Staphylococcus aureus.